The sequence spans 860 residues: Beta-glucosidase A (860 aa).

The N-terminal stretch at 1 to 19 (MRFTLIEAVALTAVSLASA) is a signal peptide. N-linked (GlcNAc...) asparagine glycans are attached at residues Asn61, Asn211, and Asn252. Asp280 is a catalytic residue. 11 N-linked (GlcNAc...) asparagine glycosylation sites follow: Asn315, Asn322, Asn354, Asn387, Asn442, Asn523, Asn542, Asn564, Asn658, Asn690, and Asn712. The interval 719 to 753 (SSGDASYGQDSSDYLPEGATDGSAQPILPAGGGPG) is disordered.

The protein belongs to the glycosyl hydrolase 3 family.

Its subcellular location is the secreted. It carries out the reaction Hydrolysis of terminal, non-reducing beta-D-glucosyl residues with release of beta-D-glucose.. Its pathway is glycan metabolism; cellulose degradation. Beta-glucosidases are one of a number of cellulolytic enzymes involved in the degradation of cellulosic biomass. Catalyzes the last step releasing glucose from the inhibitory cellobiose. This chain is Beta-glucosidase A (bglA), found in Aspergillus kawachii (strain NBRC 4308) (White koji mold).